The chain runs to 865 residues: Protein translocase subunit SecA (865 aa).

ATP-binding positions include Gln-85, 103–107 (GEGKT), and Asp-505. Zn(2+)-binding residues include Cys-847, Cys-849, Cys-858, and His-859.

It belongs to the SecA family. As to quaternary structure, monomer and homodimer. Part of the essential Sec protein translocation apparatus which comprises SecA, SecYEG and auxiliary proteins SecDF. Other proteins may also be involved. It depends on Zn(2+) as a cofactor.

The protein resides in the cell membrane. It localises to the cytoplasm. It carries out the reaction ATP + H2O + cellular proteinSide 1 = ADP + phosphate + cellular proteinSide 2.. In terms of biological role, part of the Sec protein translocase complex. Interacts with the SecYEG preprotein conducting channel. Has a central role in coupling the hydrolysis of ATP to the transfer of proteins into and across the cell membrane, serving as an ATP-driven molecular motor driving the stepwise translocation of polypeptide chains across the membrane. The sequence is that of Protein translocase subunit SecA from Lactococcus lactis subsp. cremoris (strain SK11).